The chain runs to 104 residues: Flagellar hook-basal body complex protein FliE (104 aa).

It belongs to the FliE family.

The protein resides in the bacterial flagellum basal body. The protein is Flagellar hook-basal body complex protein FliE of Escherichia fergusonii (strain ATCC 35469 / DSM 13698 / CCUG 18766 / IAM 14443 / JCM 21226 / LMG 7866 / NBRC 102419 / NCTC 12128 / CDC 0568-73).